Here is a 319-residue protein sequence, read N- to C-terminus: Ribosomal RNA small subunit methyltransferase H (319 aa).

S-adenosyl-L-methionine-binding positions include 38 to 40 (GGH), aspartate 58, phenylalanine 82, aspartate 104, and glutamine 111.

The protein belongs to the methyltransferase superfamily. RsmH family.

The protein localises to the cytoplasm. It carries out the reaction cytidine(1402) in 16S rRNA + S-adenosyl-L-methionine = N(4)-methylcytidine(1402) in 16S rRNA + S-adenosyl-L-homocysteine + H(+). Its function is as follows. Specifically methylates the N4 position of cytidine in position 1402 (C1402) of 16S rRNA. In Histophilus somni (strain 129Pt) (Haemophilus somnus), this protein is Ribosomal RNA small subunit methyltransferase H.